Consider the following 343-residue polypeptide: Allantoicase (343 aa).

Belongs to the allantoicase family.

It catalyses the reaction allantoate + H2O = (S)-ureidoglycolate + urea. It functions in the pathway nitrogen metabolism; (S)-allantoin degradation; (S)-ureidoglycolate from allantoate (aminidohydrolase route): step 1/1. In terms of biological role, utilization of purines as secondary nitrogen sources, when primary sources are limiting. In Saccharomyces cerevisiae (strain ATCC 204508 / S288c) (Baker's yeast), this protein is Allantoicase (DAL2).